The primary structure comprises 48 residues: uncharacterized protein (48 aa).

This is an uncharacterized protein from Treponema pallidum (strain Nichols).